Here is an 88-residue protein sequence, read N- to C-terminus: Apolipoprotein C-I (88 aa).

A signal peptide spans 1–26 (MRLFIALPVLIVVVAMALEGPAPAQA).

Belongs to the apolipoprotein C1 family.

The protein resides in the secreted. Functionally, inhibitor of lipoprotein binding to the low density lipoprotein (LDL) receptor, LDL receptor-related protein, and very low density lipoprotein (VLDL) receptor. Associates with high density lipoproteins (HDL) and the triacylglycerol-rich lipoproteins in the plasma and makes up about 10% of the protein of the VLDL and 2% of that of HDL. Appears to interfere directly with fatty acid uptake and is also the major plasma inhibitor of cholesteryl ester transfer protein (CETP). Binds free fatty acids and reduces their intracellular esterification. Modulates the interaction of APOE with beta-migrating VLDL and inhibits binding of beta-VLDL to the LDL receptor-related protein. The polypeptide is Apolipoprotein C-I (Apoc1) (Rattus norvegicus (Rat)).